The following is a 370-amino-acid chain: DNA-directed RNA polymerase II subunit GRINL1A (370 aa).

Positions 1–20 are disordered; the sequence is MSSLPRGFEPQTPEDLGQRS. Positions 15–69 form a coiled coil; sequence DLGQRSLAELREMLKRQERLLRNVKFICKLPDKGKKISDAVTKLKAAIAEREEVR. The tract at residues 29–68 is important for transcription repressor activity; that stretch reads KRQERLLRNVKFICKLPDKGKKISDAVTKLKAAIAEREEV. Disordered regions lie at residues 93–172, 204–226, and 241–283; these read DGDR…ASEG, DPTEHHSEGNRNPENLAGLWSGP, and KNPM…RRDR. Polar residues predominate over residues 101–131; the sequence is NSDQILDTSSPVPGCSSVANITSSQTTSRQQ. Residues 138–152 show a composition bias toward basic and acidic residues; that stretch reads RGGDAEAAEAEHTVS. Low complexity predominate over residues 155 to 170; it reads PTSSSGAPAPSSSQAS. The segment covering 205 to 214 has biased composition (basic and acidic residues); the sequence is PTEHHSEGNR. Residues 228–299 are interaction with Pol II; it reads KKPHYMEVLE…TAARLLPLHH (72 aa). Positions 254-266 are enriched in polar residues; sequence VLPSQPRDSSSAC. At S271 the chain carries Phosphoserine. An important for transcription repressor activity region spans residues 300–315; it reads LPTQLLSIEESLALQR. Residues 303–328 adopt a coiled-coil conformation; that stretch reads QLLSIEESLALQRQQKQSYEEIQAKL. Residues 316 to 341 form an interaction with Pol II region; sequence QQKQSYEEIQAKLAAQKLAERLNIKM. Positions 340-370 are disordered; the sequence is KMQSYNPEGESSRKYREVRDEDDDQSSEDEF. A compositionally biased stretch (basic and acidic residues) spans 349–358; that stretch reads ESSRKYREVR. The span at 359–370 shows a compositional bias: acidic residues; that stretch reads DEDDDQSSEDEF.

It belongs to the GRINL1 family. As to quaternary structure, component of the Pol II(G) complex, which contains the RNA polymerase II (Pol II) core complex subunits and POLR2M and appears to be an abundant form of Pol II. Dephosphorylated at Ser-271 by the PNUTS-PP1 complex, promoting RNA polymerase II transcription pause-release.

Its subcellular location is the nucleus. Its function is as follows. Appears to be a stable component of the Pol II(G) complex form of RNA polymerase II (Pol II). Pol II synthesizes mRNA precursors and many functional non-coding RNAs and is the central component of the basal RNA polymerase II transcription machinery. May play a role in Mediator complex-dependent regulation of transcription activation. Acts in vitro as a negative regulator of transcriptional activation; this repression is relieved by the Mediator complex, which restores Pol II(G) activator-dependent transcription to a level equivalent to that of Pol II. This chain is DNA-directed RNA polymerase II subunit GRINL1A (POLR2M), found in Bos taurus (Bovine).